The primary structure comprises 1196 residues: Major DNA-binding protein (1196 aa).

The segment at 499–512 is a zinc-finger region; sequence CNLCTFDTRHACVH. 2 short sequence motifs (required for filament formation) span residues 843–844 and 1142–1144; these read FW and FNF. Positions 1158–1196 are disordered; it reads GGPGAPGPAFAGRKRAFHGDDPFGEGPPDKKGDLTLDML. Residues 1170–1196 are required for nuclear localization; that stretch reads RKRAFHGDDPFGEGPPDKKGDLTLDML. Residues 1174-1196 show a composition bias toward basic and acidic residues; that stretch reads FHGDDPFGEGPPDKKGDLTLDML.

This sequence belongs to the herpesviridae major DNA-binding protein family. Homooligomers. Forms double-helical filaments necessary for the formation of replication compartments within the host nucleus. Interacts with the origin-binding protein. Interacts with the helicase primase complex; this interaction stimulates primer synthesis activity of the helicase-primase complex. Interacts with the DNA polymerase. Interacts with the alkaline exonuclease; this interaction increases its nuclease processivity. Interacts with ICP27; this interaction plays a role in the stimulation of late gene transcription.

The protein localises to the host nucleus. In terms of biological role, plays several crucial roles in viral infection. Participates in the opening of the viral DNA origin to initiate replication by interacting with the origin-binding protein. May disrupt loops, hairpins and other secondary structures present on ssDNA to reduce and eliminate pausing of viral DNA polymerase at specific sites during elongation. Promotes viral DNA recombination by performing strand-transfer, characterized by the ability to transfer a DNA strand from a linear duplex to a complementary single-stranded DNA circle. Can also catalyze the renaturation of complementary single strands. Additionally, reorganizes the host cell nucleus, leading to the formation of prereplicative sites and replication compartments. This process is driven by the protein which can form double-helical filaments in the absence of DNA. The protein is Major DNA-binding protein of Homo sapiens (Human).